Reading from the N-terminus, the 559-residue chain is Urocanate hydratase (559 aa).

NAD(+)-binding positions include 50–51, glutamine 128, 174–176, aspartate 194, arginine 199, 240–241, 261–265, 271–272, and tyrosine 320; these read GG, GMG, NA, QTSAH, and YI. Cysteine 408 is a catalytic residue. Glycine 490 provides a ligand contact to NAD(+).

It belongs to the urocanase family. It depends on NAD(+) as a cofactor.

The protein resides in the cytoplasm. It carries out the reaction 4-imidazolone-5-propanoate = trans-urocanate + H2O. Its pathway is amino-acid degradation; L-histidine degradation into L-glutamate; N-formimidoyl-L-glutamate from L-histidine: step 2/3. Its function is as follows. Catalyzes the conversion of urocanate to 4-imidazolone-5-propionate. In Halalkalibacterium halodurans (strain ATCC BAA-125 / DSM 18197 / FERM 7344 / JCM 9153 / C-125) (Bacillus halodurans), this protein is Urocanate hydratase.